Consider the following 127-residue polypeptide: Flagellar hook-basal body complex protein FliE (127 aa).

This sequence belongs to the FliE family.

The protein localises to the bacterial flagellum basal body. The sequence is that of Flagellar hook-basal body complex protein FliE from Leptospira interrogans serogroup Icterohaemorrhagiae serovar copenhageni (strain Fiocruz L1-130).